The sequence spans 862 residues: Cadherin-related family member 5 (862 aa).

Positions 1–28 are cleaved as a signal peptide; the sequence is MGAPALLWPPLLLPLLTVLFGHLPGTLA. At 29–671 the chain is on the extracellular side; sequence QAQVCSANQT…GQRFSTVDMA (643 aa). N-linked (GlcNAc...) asparagine glycans are attached at residues asparagine 36, asparagine 45, asparagine 135, asparagine 173, asparagine 201, asparagine 311, asparagine 408, asparagine 438, and asparagine 479. 4 Cadherin domains span residues 40 to 127, 128 to 240, 252 to 357, and 358 to 462; these read FTMN…APEF, PFTI…TPWF, IQAQ…PLQF, and SQSL…PPST. The segment at 452–658 is disordered; the sequence is IQVSEREPPS…TTGPISGVGE (207 aa). The segment covering 461-500 has biased composition (low complexity); it reads STESPTPPEAGGTTGPSSNTTLETPSTSGTSQGPATTSSG. The span at 529–652 shows a compositional bias: polar residues; that stretch reads LGISTSPQTA…GTSQPTTTGP (124 aa). 3 tandem repeats follow at residues 545-575, 576-606, and 607-636. Residues 545–648 are 4 X 31 AA approximate tandem repeats; the sequence is TQTPKPGTSQ…TPKPGTSQPT (104 aa). The 4; truncated repeat unit spans residues 637 to 648; the sequence is TQTPKPGTSQPT. A helical membrane pass occupies residues 672–692; sequence VLGGVLGALLLLALIFLIILI. At 693–862 the chain is on the cytoplasmic side; sequence HKHYRHRFTC…LGAVADNTYV (170 aa). The mediates interaction with USH1C and MYO7B and is required for proper localization to microvilli tips and function in microvilli organization stretch occupies residues 693-862; it reads HKHYRHRFTC…LGAVADNTYV (170 aa). Disordered regions lie at residues 706–803 and 821–862; these read KAKE…EGGY and LNEP…NTYV. Phosphoserine is present on residues serine 729, serine 751, and serine 755. Pro residues predominate over residues 739–768; that stretch reads GPEPVQPPLRPPSPMSSSPTPPSSMPPSPQ. Threonine 758 carries the phosphothreonine modification. 2 positions are modified to phosphoserine: serine 766 and serine 783. Basic and acidic residues predominate over residues 791–801; sequence LTKERRPEGEG. Phosphothreonine is present on threonine 825. Over residues 827–837 the composition is skewed to low complexity; sequence DVDSASASGSE. Phosphoserine occurs at positions 832, 834, and 836.

Part of the IMAC/intermicrovillar adhesion complex/intermicrovillar tip-link complex composed of ANKS4B, MYO7B, USH1C, CDHR2 and CDHR5. Interacts (via cytoplasmic domain) with USH1C and MYO7B; required for proper localization of CDHR5 to microvilli tips and its function in brush border differentiation. In terms of processing, N- and O-glycosylated. In terms of tissue distribution, expressed predominantly in kidney. Also detected in lung and small intestine.

The protein localises to the apical cell membrane. It is found in the cell projection. It localises to the microvillus membrane. In terms of biological role, intermicrovillar adhesion molecule that forms, via its extracellular domain, calcium-dependent heterophilic complexes with CDHR2 on adjacent microvilli. Thereby, controls the packing of microvilli at the apical membrane of epithelial cells. Through its cytoplasmic domain, interacts with microvillus cytoplasmic proteins to form the intermicrovillar adhesion complex/IMAC. This complex plays a central role in microvilli and epithelial brush border differentiation. The sequence is that of Cadherin-related family member 5 from Rattus norvegicus (Rat).